We begin with the raw amino-acid sequence, 1352 residues long: DNA-directed RNA polymerase subunit beta (1352 aa).

It belongs to the RNA polymerase beta chain family. As to quaternary structure, the RNAP catalytic core consists of 2 alpha, 1 beta, 1 beta' and 1 omega subunit. When a sigma factor is associated with the core the holoenzyme is formed, which can initiate transcription.

The enzyme catalyses RNA(n) + a ribonucleoside 5'-triphosphate = RNA(n+1) + diphosphate. In terms of biological role, DNA-dependent RNA polymerase catalyzes the transcription of DNA into RNA using the four ribonucleoside triphosphates as substrates. This is DNA-directed RNA polymerase subunit beta from Hydrogenovibrio crunogenus (strain DSM 25203 / XCL-2) (Thiomicrospira crunogena).